A 437-amino-acid polypeptide reads, in one-letter code: Amino-acid acetyltransferase (437 aa).

The N-acetyltransferase domain maps to 289–429 (ENIRLATSFD…EHYNYQRMSK (141 aa)).

It belongs to the acetyltransferase family. ArgA subfamily.

It localises to the cytoplasm. The enzyme catalyses L-glutamate + acetyl-CoA = N-acetyl-L-glutamate + CoA + H(+). Its pathway is amino-acid biosynthesis; L-arginine biosynthesis; N(2)-acetyl-L-ornithine from L-glutamate: step 1/4. The polypeptide is Amino-acid acetyltransferase (Actinobacillus pleuropneumoniae serotype 7 (strain AP76)).